Reading from the N-terminus, the 172-residue chain is Small ribosomal subunit protein uS5 (172 aa).

The region spanning leucine 17–valine 80 is the S5 DRBM domain.

It belongs to the universal ribosomal protein uS5 family. As to quaternary structure, part of the 30S ribosomal subunit. Contacts proteins S4 and S8.

Functionally, with S4 and S12 plays an important role in translational accuracy. Its function is as follows. Located at the back of the 30S subunit body where it stabilizes the conformation of the head with respect to the body. The protein is Small ribosomal subunit protein uS5 of Paraburkholderia phytofirmans (strain DSM 17436 / LMG 22146 / PsJN) (Burkholderia phytofirmans).